Consider the following 108-residue polypeptide: Putative double-stranded DNA mimic protein PBPRA1522 (108 aa).

This sequence belongs to the putative dsDNA mimic protein family.

Functionally, may act as a double-stranded DNA (dsDNA) mimic. Probably regulates the activity of a dsDNA-binding protein. The chain is Putative double-stranded DNA mimic protein PBPRA1522 from Photobacterium profundum (strain SS9).